Here is a 251-residue protein sequence, read N- to C-terminus: tRNA (guanine-N(7)-)-methyltransferase (251 aa).

S-adenosyl-L-methionine contacts are provided by residues glycine 72, 95 to 96, 132 to 133, and leucine 152; these read EI and NA. Aspartate 155 is a catalytic residue. 230–232 lines the S-adenosyl-L-methionine pocket; that stretch reads SEE.

It belongs to the class I-like SAM-binding methyltransferase superfamily. TrmB family.

It is found in the nucleus. The enzyme catalyses guanosine(46) in tRNA + S-adenosyl-L-methionine = N(7)-methylguanosine(46) in tRNA + S-adenosyl-L-homocysteine. It functions in the pathway tRNA modification; N(7)-methylguanine-tRNA biosynthesis. In terms of biological role, catalyzes the formation of N(7)-methylguanine at position 46 (m7G46) in tRNA. The protein is tRNA (guanine-N(7)-)-methyltransferase of Drosophila willistoni (Fruit fly).